A 364-amino-acid polypeptide reads, in one-letter code: MKLIKLKLASFRNLQNIELAPGKKFNVFYGNNGQGKTNLLESIYLLATMKSFKQARNAELIAFGGEFALVKGTVERDQVRREIAVLIEKQGKKAKVDAKLMTRLDDFFGNLNVVLFTPEEISMVRGGPDLRRRYLDRAVFTCDLGYLTAYHDYAKILKNRNALLKVNETAGIEVWTEQLVQAALLVIERRKAYLDRIGRLLQGFYSEISGNDETVQIEYRLHGVDARLFAEDPAEALNQALRAHAAEERRRGSTAIGPHRDDLYFGLNGRGARQFASQGQQRSFVLALKMAEIEHITRCFEAPPVLLLDDMTSELDRERNRNLMEFLKKREMQVFITTTSLHNVDVDELQDNRTFRIKEGKILD.

ATP is bound at residue 30–37 (GNNGQGKT).

The protein belongs to the RecF family.

The protein resides in the cytoplasm. The RecF protein is involved in DNA metabolism; it is required for DNA replication and normal SOS inducibility. RecF binds preferentially to single-stranded, linear DNA. It also seems to bind ATP. The sequence is that of DNA replication and repair protein RecF from Geobacter sp. (strain M21).